We begin with the raw amino-acid sequence, 580 residues long: Laccase-20 (580 aa).

Residues 1-23 form the signal peptide; it reads MVASLLCTVAVAVLAVAAVGGEA. 2 consecutive Plastocyanin-like domains span residues 31–147 and 156–310; these read VVHE…PRDG and KDVP…YTGV. Residues Asn36 and Asn42 are each glycosylated (N-linked (GlcNAc...) asparagine). Cu cation-binding residues include His81 and His83. A glycan (N-linked (GlcNAc...) asparagine) is linked at Asn115. 2 residues coordinate Cu cation: His126 and His128. N-linked (GlcNAc...) asparagine glycans are attached at residues Asn200, Asn339, Asn373, Asn392, Asn399, Asn429, and Asn460. Residues 419–561 enclose the Plastocyanin-like 3 domain; sequence DFPVRPPRPY…ATAFIVEDGP (143 aa). Residues Asn478, His481, His483, His540, Cys541, His542, His546, and Met551 each coordinate Cu cation. A disordered region spans residues 560–580; that stretch reads GPTPETSLPPPPPEFKRCDAS.

It belongs to the multicopper oxidase family. It depends on Cu cation as a cofactor.

Its subcellular location is the secreted. The protein resides in the extracellular space. It is found in the apoplast. The enzyme catalyses 4 hydroquinone + O2 = 4 benzosemiquinone + 2 H2O. In terms of biological role, lignin degradation and detoxification of lignin-derived products. The chain is Laccase-20 (LAC20) from Oryza sativa subsp. japonica (Rice).